A 201-amino-acid polypeptide reads, in one-letter code: Small ribosomal subunit protein uS4c (201 aa).

One can recognise an S4 RNA-binding domain in the interval 90–153 (MRLDNVIFRL…SSQNLVKRYL (64 aa)).

Belongs to the universal ribosomal protein uS4 family. Part of the 30S ribosomal subunit. Contacts protein S5. The interaction surface between S4 and S5 is involved in control of translational fidelity.

The protein resides in the plastid. It localises to the chloroplast. One of the primary rRNA binding proteins, it binds directly to 16S rRNA where it nucleates assembly of the body of the 30S subunit. Its function is as follows. With S5 and S12 plays an important role in translational accuracy. The chain is Small ribosomal subunit protein uS4c (rps4) from Gracilaria tenuistipitata var. liui (Red alga).